A 307-amino-acid polypeptide reads, in one-letter code: Taste receptor type 2 member 41 (307 aa).

Residues 1–7 (MQAALMA) lie on the Extracellular side of the membrane. The helical transmembrane segment at 8–28 (FFMLLFSLLSLLGIAANGFIV) threads the bilayer. The Cytoplasmic portion of the chain corresponds to 29-40 (LVLGREWLRYGR). A helical transmembrane segment spans residues 41-61 (LLPLDMILISLGASRXCLQLV). Residues 62–88 (GTVHNFYYSARKVEYSGGLGRQFFHLH) lie on the Extracellular side of the membrane. Residues 89 to 109 (WHFLNSATFWFCSWLSVLFCV) traverse the membrane as a helical segment. The Cytoplasmic segment spans residues 110-129 (KIANITHPTFLWLKWRFPGW). Residues 130-150 (VPWLLLGSVLISFIITLLFFW) traverse the membrane as a helical segment. Residues 151–183 (VNYPVYQELLIRKFSGNMTYKWNTRIETYYFPS) lie on the Extracellular side of the membrane. N-linked (GlcNAc...) asparagine glycosylation is present at N167. A helical membrane pass occupies residues 184–204 (LKLVIWSIPFSVFLVSIMLLI). Residues 205-234 (NSLRRHTQRMQHNGHSLQDPSTQAHTRALK) lie on the Cytoplasmic side of the membrane. A helical membrane pass occupies residues 235-255 (SLISFLFLYALSFLSLIIDAT). Residues 256–264 (KFISMQNDF) lie on the Extracellular side of the membrane. A helical transmembrane segment spans residues 265-285 (YWPWQIAVYLCISVHPFILIF). The Cytoplasmic portion of the chain corresponds to 286–307 (SNLKLRSMFWQVLLLARGFWVA).

This sequence belongs to the G-protein coupled receptor T2R family.

It is found in the membrane. In terms of biological role, receptor that may play a role in the perception of bitterness and is gustducin-linked. May play a role in sensing the chemical composition of the gastrointestinal content. The activity of this receptor may stimulate alpha gustducin, mediate PLC-beta-2 activation and lead to the gating of TRPM5. The chain is Taste receptor type 2 member 41 (TAS2R41) from Gorilla gorilla gorilla (Western lowland gorilla).